A 351-amino-acid chain; its full sequence is Alcohol dehydrogenase 2 (351 aa).

Zn(2+)-binding residues include Cys47, His70, Cys101, Cys104, Cys107, Cys115, and Cys157. NAD(+)-binding positions include 181–187 (GAGGGLG), Asp205, Lys209, 271–273 (VGL), and Arg343.

Belongs to the zinc-containing alcohol dehydrogenase family. Homotetramer. Zn(2+) serves as cofactor.

It carries out the reaction a primary alcohol + NAD(+) = an aldehyde + NADH + H(+). It catalyses the reaction a secondary alcohol + NAD(+) = a ketone + NADH + H(+). This chain is Alcohol dehydrogenase 2 (sodh-2), found in Caenorhabditis elegans.